The chain runs to 1002 residues: MLRAAAAAAAVFPSRFAAAPAVAAVEEVRSPLLRVLGALRGGRVSTLGRRARFCSNSAGSDSEAAAAEAKAEDAVAAEGEADGKASSAIVPTVLRPEDCLSVIALPLPHRPLFPGFYMPIYVKDQKLLQALVENRKRSIPYAGAFLVKDEEGTDPNIVTSSDSDKSIDDLKGKELLQRLNEVGTLAQITSIQGDQVVLLGHRRLKITEMVQEDPLTVKVDHLKEKPYDKDDDVIKATSFEVISTLREVLKASSLWKDHVQTYTQHMGDFNYPRLADFGAAISGANKFLCQEVLEELDVYKRLKLTLELVKKEMEISKLQQSIAKAIEEKISGDQRRYLLNEQLKAIKKELGLETDDKTALSAKFRERIEAKKEKCPAHVLQVIEEELTKLQLLEASSSEFNVTRNYLDWLTVLPWGNYSDENFDVHHAQQILDEDHYGLSDVKERILEFIAVGKLRGTSQGKIICLSGPPGVGKTSIGRSIARALNRKFYRFSVGGLADVAEIKGHRRTYVGAMPGKMVQCLKSVGTANPLVLIDEIDKLGRGHSGDPASALLELLDPEQNVNFLDHYLDVPIDLSKVLFVCTANVIEMIPNPLLDRMEIIAIAGYITDEKMHIARDYLEKNTREACGIKPEQAEVTDAALLALIESYCREAGVRNLQKQIEKIYRKIALQLVRQGVSNEPTQEAAIVTASEEPNGGDSANKLKDETMEDPATENAAMTNADTASKEASELDLLNRTVDHDVHPAETPKEAVLTDSALSTDKLCTPEGNKDMEGAKEESADKAVEKVVIDSSNLGDYVGKPVFQAERIYEQTPVGVVMGLAWTAMGGSTLYIETTKVEEGDGKGALVMTGQLGDVMKESAQIAHTVGRAILLDKEPENLFFANSKVHLHVPAGSTPKDGPSAGCTMITSMLSLAMGKPVKKDLAMTGEVTLTGRILPIGGVKEKTIAARRSAVKTIVFPAANKRDFDELAPNVKEGLEVHFVDTYNEIFDIAFQSETQTETS.

A Lon N-terminal domain is found at 102 to 313; sequence VIALPLPHRP…LTLELVKKEM (212 aa). 468 to 475 contacts ATP; it reads GPPGVGKT. The 185-residue stretch at 811-995 folds into the Lon proteolytic domain; that stretch reads QTPVGVVMGL…NEIFDIAFQS (185 aa). Catalysis depends on residues S901 and K944.

It belongs to the peptidase S16 family. As to quaternary structure, homohexamer or homoheptamer. Organized in a ring with a central cavity.

It localises to the mitochondrion matrix. The catalysed reaction is Hydrolysis of proteins in presence of ATP.. Its function is as follows. ATP-dependent serine protease that mediates the selective degradation of misfolded, unassembled or oxidatively damaged polypeptides as well as certain short-lived regulatory proteins in the mitochondrial matrix. May also have a chaperone function in the assembly of inner membrane protein complexes. Participates in the regulation of mitochondrial gene expression and in the maintenance of the integrity of the mitochondrial genome. Binds to mitochondrial DNA in a site-specific manner. This is Lon protease homolog, mitochondrial from Oryza sativa subsp. japonica (Rice).